We begin with the raw amino-acid sequence, 360 residues long: Dihydroorotate dehydrogenase (quinone) (360 aa).

FMN contacts are provided by residues 67-71 and T91; that span reads AGLDK. K71 serves as a coordination point for substrate. 116-120 contacts substrate; sequence NRMGF. Positions 145 and 176 each coordinate FMN. N176 serves as a coordination point for substrate. The active-site Nucleophile is the S179. Residue N181 coordinates substrate. The FMN site is built by K222 and S250. Position 251 to 252 (251 to 252) interacts with substrate; sequence NT. Residues G272, G301, and 322-323 contribute to the FMN site; that span reads YS.

It belongs to the dihydroorotate dehydrogenase family. Type 2 subfamily. As to quaternary structure, monomer. It depends on FMN as a cofactor.

The protein resides in the cell membrane. The catalysed reaction is (S)-dihydroorotate + a quinone = orotate + a quinol. It functions in the pathway pyrimidine metabolism; UMP biosynthesis via de novo pathway; orotate from (S)-dihydroorotate (quinone route): step 1/1. Functionally, catalyzes the conversion of dihydroorotate to orotate with quinone as electron acceptor. This Deinococcus deserti (strain DSM 17065 / CIP 109153 / LMG 22923 / VCD115) protein is Dihydroorotate dehydrogenase (quinone).